A 146-amino-acid polypeptide reads, in one-letter code: Large ribosomal subunit protein bL17 (146 aa).

The disordered stretch occupies residues 118-146; sequence RDPAAKGQDSGPKPEVASDEDEAGEAAAA. Residues 134–146 are compositionally biased toward acidic residues; it reads ASDEDEAGEAAAA.

It belongs to the bacterial ribosomal protein bL17 family. Part of the 50S ribosomal subunit. Contacts protein L32.

The protein is Large ribosomal subunit protein bL17 of Acidiphilium cryptum (strain JF-5).